Here is a 366-residue protein sequence, read N- to C-terminus: uncharacterized protein (366 aa).

The segment at 1 to 135 (MNQTGRTIGG…PPKNVDTIDK (135 aa)) is disordered. Residues 26–38 (PSEDRVSSRDETP) are compositionally biased toward basic and acidic residues. S69 is modified (phosphoserine). T76 bears the Phosphothreonine mark. A Glycyl lysine isopeptide (Lys-Gly) (interchain with G-Cter in ubiquitin) cross-link involves residue K78. The span at 97 to 108 (QHNHHHHRRTSH) shows a compositional bias: basic residues. A Glycyl lysine isopeptide (Lys-Gly) (interchain with G-Cter in ubiquitin) cross-link involves residue K187. At T189 the chain carries Phosphothreonine. K242 is covalently cross-linked (Glycyl lysine isopeptide (Lys-Gly) (interchain with G-Cter in ubiquitin)). Phosphoserine occurs at positions 288 and 294. The tract at residues 313–366 (THSGHLEQKDVDDNRTSVPVTATQGSGHEDVVKKENTGNKLLRRVKSLKTSKKH) is disordered. Residues 316–327 (GHLEQKDVDDNR) are compositionally biased toward basic and acidic residues. The segment covering 328-338 (TSVPVTATQGS) has biased composition (polar residues). The segment covering 339 to 349 (GHEDVVKKENT) has biased composition (basic and acidic residues). A compositionally biased stretch (basic residues) spans 353–366 (LLRRVKSLKTSKKH). Position 359 is a phosphoserine (S359).

The protein belongs to the pal1 family.

The protein localises to the cytoplasm. It is found in the nucleus. This is an uncharacterized protein from Saccharomyces cerevisiae (strain ATCC 204508 / S288c) (Baker's yeast).